Consider the following 384-residue polypeptide: Cytochrome b (384 aa).

The next 4 helical transmembrane spans lie at 33–53 (YGSL…FLAM), 77–98 (WLIR…YLHI), 113–133 (WNVG…GYVL), and 178–198 (FFAF…IHLL). His83 and His97 together coordinate heme b. Residues His182 and His196 each contribute to the heme b site. An a ubiquinone-binding site is contributed by His201. 4 consecutive transmembrane segments (helical) span residues 226–246 (YKDL…ALFT), 288–308 (LGGV…PILH), 320–340 (LSQM…WIGG), and 347–367 (FIII…VLMP).

It belongs to the cytochrome b family. The cytochrome bc1 complex contains 3 respiratory subunits (MT-CYB, CYC1 and UQCRFS1), 2 core proteins (UQCRC1 and UQCRC2) and probably 6 low-molecular weight proteins. Heme b is required as a cofactor.

Its subcellular location is the mitochondrion inner membrane. In terms of biological role, component of the ubiquinol-cytochrome c reductase complex (complex III or cytochrome b-c1 complex) that is part of the mitochondrial respiratory chain. The b-c1 complex mediates electron transfer from ubiquinol to cytochrome c. Contributes to the generation of a proton gradient across the mitochondrial membrane that is then used for ATP synthesis. This is Cytochrome b (mt-cyb) from Anoplogaster cornuta (Common fangtooth).